We begin with the raw amino-acid sequence, 111 residues long: Large ribosomal subunit protein uL22 (111 aa).

Belongs to the universal ribosomal protein uL22 family. As to quaternary structure, part of the 50S ribosomal subunit.

Its function is as follows. This protein binds specifically to 23S rRNA; its binding is stimulated by other ribosomal proteins, e.g. L4, L17, and L20. It is important during the early stages of 50S assembly. It makes multiple contacts with different domains of the 23S rRNA in the assembled 50S subunit and ribosome. In terms of biological role, the globular domain of the protein is located near the polypeptide exit tunnel on the outside of the subunit, while an extended beta-hairpin is found that lines the wall of the exit tunnel in the center of the 70S ribosome. The chain is Large ribosomal subunit protein uL22 from Chlamydia abortus (strain DSM 27085 / S26/3) (Chlamydophila abortus).